The primary structure comprises 159 residues: Small ribosomal subunit protein uS4 (159 aa).

Residues 106–158 form the S4 RNA-binding domain; the sequence is RRLQTIVYRMGLAKSIHHARQLIVHGHVAVAGRRVTSPGFLVPRELEDKISLI.

This sequence belongs to the universal ribosomal protein uS4 family. In terms of assembly, part of the 30S ribosomal subunit. Contacts protein S5. The interaction surface between S4 and S5 is involved in control of translational fidelity.

Functionally, one of the primary rRNA binding proteins, it binds directly to 16S rRNA where it nucleates assembly of the body of the 30S subunit. With S5 and S12 plays an important role in translational accuracy. This is Small ribosomal subunit protein uS4 from Pyrobaculum aerophilum (strain ATCC 51768 / DSM 7523 / JCM 9630 / CIP 104966 / NBRC 100827 / IM2).